The chain runs to 348 residues: Elongation factor Ts (348 aa).

The tract at residues 82–85 (TDFV) is involved in Mg(2+) ion dislocation from EF-Tu.

Belongs to the EF-Ts family.

It localises to the cytoplasm. In terms of biological role, associates with the EF-Tu.GDP complex and induces the exchange of GDP to GTP. It remains bound to the aminoacyl-tRNA.EF-Tu.GTP complex up to the GTP hydrolysis stage on the ribosome. The sequence is that of Elongation factor Ts from Aliarcobacter butzleri (strain RM4018) (Arcobacter butzleri).